Reading from the N-terminus, the 506-residue chain is UDP-N-acetylmuramoyl-L-alanyl-D-glutamate--2,6-diaminopimelate ligase (506 aa).

Serine 42 is a UDP-N-acetyl-alpha-D-muramoyl-L-alanyl-D-glutamate binding site. 125–131 (GTSGKTT) contributes to the ATP binding site. UDP-N-acetyl-alpha-D-muramoyl-L-alanyl-D-glutamate is bound by residues 166–167 (TT), serine 193, and arginine 201. An N6-carboxylysine modification is found at lysine 233. Residues arginine 395, 419–422 (DNPR), glycine 475, and glutamate 479 each bind meso-2,6-diaminopimelate. Residues 419–422 (DNPR) carry the Meso-diaminopimelate recognition motif motif.

The protein belongs to the MurCDEF family. MurE subfamily. Mg(2+) is required as a cofactor. In terms of processing, carboxylation is probably crucial for Mg(2+) binding and, consequently, for the gamma-phosphate positioning of ATP.

The protein resides in the cytoplasm. It carries out the reaction UDP-N-acetyl-alpha-D-muramoyl-L-alanyl-D-glutamate + meso-2,6-diaminopimelate + ATP = UDP-N-acetyl-alpha-D-muramoyl-L-alanyl-gamma-D-glutamyl-meso-2,6-diaminopimelate + ADP + phosphate + H(+). The protein operates within cell wall biogenesis; peptidoglycan biosynthesis. Its function is as follows. Catalyzes the addition of meso-diaminopimelic acid to the nucleotide precursor UDP-N-acetylmuramoyl-L-alanyl-D-glutamate (UMAG) in the biosynthesis of bacterial cell-wall peptidoglycan. This is UDP-N-acetylmuramoyl-L-alanyl-D-glutamate--2,6-diaminopimelate ligase from Streptomyces avermitilis (strain ATCC 31267 / DSM 46492 / JCM 5070 / NBRC 14893 / NCIMB 12804 / NRRL 8165 / MA-4680).